The chain runs to 231 residues: Putative aminodeoxychorismate lyase (231 aa).

It belongs to the class-IV pyridoxal-phosphate-dependent aminotransferase family. Requires pyridoxal 5'-phosphate as cofactor.

The protein localises to the cytoplasm. The protein resides in the nucleus. The catalysed reaction is 4-amino-4-deoxychorismate = 4-aminobenzoate + pyruvate + H(+). Its pathway is cofactor biosynthesis; tetrahydrofolate biosynthesis; 4-aminobenzoate from chorismate: step 2/2. In terms of biological role, converts 4-amino-4-deoxychorismate into 4-aminobenzoate (PABA) and pyruvate. The chain is Putative aminodeoxychorismate lyase from Schizosaccharomyces pombe (strain 972 / ATCC 24843) (Fission yeast).